We begin with the raw amino-acid sequence, 239 residues long: 6-phosphogluconolactonase (239 aa).

Belongs to the glucosamine/galactosamine-6-phosphate isomerase family. 6-phosphogluconolactonase subfamily.

It catalyses the reaction 6-phospho-D-glucono-1,5-lactone + H2O = 6-phospho-D-gluconate + H(+). The protein operates within carbohydrate degradation; pentose phosphate pathway; D-ribulose 5-phosphate from D-glucose 6-phosphate (oxidative stage): step 2/3. Its function is as follows. Hydrolysis of 6-phosphogluconolactone to 6-phosphogluconate. In Xylella fastidiosa (strain Temecula1 / ATCC 700964), this protein is 6-phosphogluconolactonase (pgl).